The chain runs to 303 residues: uncharacterized protein (303 aa).

The next 6 helical transmembrane spans lie at 12–32, 81–101, 117–137, 174–194, 208–228, and 265–286; these read GLPIGSPMYAHLLAGAFSGIL, ISSVIMGAGPSHAIYFSVLEF, ALAGACAITISDAFMTPFDVI, CIAMSIPFTAIQVATYDTCMS, IISGGLSGAIASSLTTPLDVV, and FFKGIRPRMVVAMPATAVSWAA. Solcar repeat units lie at residues 17–105, 111–195, and 206–293; these read SPMY…FKSK, DRPL…CMSF, and SHII…GKEI.

The protein belongs to the mitochondrial carrier (TC 2.A.29) family.

It localises to the mitochondrion inner membrane. This is an uncharacterized protein from Schizosaccharomyces pombe (strain 972 / ATCC 24843) (Fission yeast).